A 111-amino-acid polypeptide reads, in one-letter code: Large ribosomal subunit protein uL24 (111 aa).

A compositionally biased stretch (basic and acidic residues) spans 48–65 (EKPSRSNREGGRTEREAP). The interval 48-111 (EKPSRSNREG…AKTTGEELDD (64 aa)) is disordered. The segment covering 69 to 80 (SNVNPIDSNGES) has biased composition (polar residues). Basic and acidic residues predominate over residues 86–95 (KKVEDPDTGR).

Belongs to the universal ribosomal protein uL24 family. In terms of assembly, part of the 50S ribosomal subunit.

Functionally, one of two assembly initiator proteins, it binds directly to the 5'-end of the 23S rRNA, where it nucleates assembly of the 50S subunit. Its function is as follows. One of the proteins that surrounds the polypeptide exit tunnel on the outside of the subunit. The protein is Large ribosomal subunit protein uL24 of Salinibacter ruber (strain DSM 13855 / M31).